Reading from the N-terminus, the 223-residue chain is SCMKAAPMKEVSIRGQGSLAYPGLRTQGNLETLSGPNDATRGLTSLADTFEHVIEELLDEQEVIQPSKENKDADLYSSRVMLSSQVPLEPPLLFLLEEYKNYLDAANMSMRVRRHSDPARRGELSVCDSISEWVTAAEKKTAVDMSGATVTVLEKVPVPKGQLKQYFYETKCSSKGYAKEGCRGIDKRYWNSQCRTTQSYVRALTMDNKKRVGWRFIRIDTSC.

The first 5 residues, 1–5 (SCMKA), serve as a signal peptide directing secretion. The propeptide occupies 6–114 (APMKEVSIRG…AANMSMRVRR (109 aa)). Asparagine 107 carries an N-linked (GlcNAc...) asparagine glycan. 2 disulfide bridges follow: cysteine 127–cysteine 194 and cysteine 172–cysteine 223.

Belongs to the NGF-beta family.

It localises to the secreted. Functionally, promotes the survival of neuronal populations that are all located either in the central nervous system or directly connected to it. The sequence is that of Neurotrophic factor BDNF precursor form (BDNF) from Exiliboa placata (Oaxacan dwarf boa).